We begin with the raw amino-acid sequence, 140 residues long: Hexon-interlacing protein (140 aa).

The stretch at leucine 100–glutamine 127 forms a coiled coil. Serine 135 is modified (phosphoserine; by host).

Belongs to the adenoviridae hexon-interlacing protein family. In terms of assembly, homotrimer. Interacts with hexon protein; this interaction tethers the hexons together. Self-interacts with adjacent proteins. Interacts with kinesin light chain KLC1; this interaction leads to capsid disruption at the nuclear pore complex during virus entry into host cell.

It is found in the virion. The protein resides in the host nucleus. Structural component of the virion that forms triskelion structures consisting of three molecules that stabilize three hexon trimers at the center of each icosahedral facet and fixes the peripentonal hexons. Dispensable for assembly. During virus entry, recruits the anterograde motor kinesin-1 to the capsid docked at the nuclear pore complex thereby subjecting the docked capsid to a pulling force. The resulting tension leads to capsid disruption, dispersion of capsid fragments toward cell periphery and eventually viral DNA entry into the host nucleus. The polypeptide is Hexon-interlacing protein (Human adenovirus C serotype 2 (HAdV-2)).